The sequence spans 301 residues: uncharacterized protein (301 aa).

It belongs to the asfivirus E301R family. Interacts with host IRF3.

Plays a role in the inhibition of host innate immune system by acting as a negatively regulator of type I interferon production. Mechanistically, interacts with and prevents host IRF3 nuclear localization to inhibit its transcriptional activity. This is an uncharacterized protein from African swine fever virus (strain Badajoz 1971 Vero-adapted) (Ba71V).